The primary structure comprises 859 residues: DNA mismatch repair protein MutS (859 aa).

An ATP-binding site is contributed by 618 to 625 (GPNMGGKS). The disordered stretch occupies residues 803–829 (RDHDVQQNTEQQGTQQNMSFVPSAPSP). The span at 808–819 (QQNTEQQGTQQN) shows a compositional bias: low complexity.

This sequence belongs to the DNA mismatch repair MutS family.

Functionally, this protein is involved in the repair of mismatches in DNA. It is possible that it carries out the mismatch recognition step. This protein has a weak ATPase activity. This Shewanella pealeana (strain ATCC 700345 / ANG-SQ1) protein is DNA mismatch repair protein MutS.